The primary structure comprises 831 residues: DNA helicase MCM8 (831 aa).

A compositionally biased stretch (gly residues) spans methionine 1–proline 20. A disordered region spans residues methionine 1 to proline 53. The region spanning leucine 395 to valine 602 is the MCM domain. Glycine 447 to serine 454 contacts ATP.

The protein belongs to the MCM family. In terms of assembly, component of the MCM8-MCM9 complex, which forms a hexamer composed of mcm8 and mcm9.

It localises to the nucleus. It catalyses the reaction ATP + H2O = ADP + phosphate + H(+). Its function is as follows. Component of the MCM8-MCM9 complex, a complex involved in homologous recombination repair following DNA interstrand cross-links and plays a key role during gametogenesis. The MCM8-MCM9 complex probably acts as a hexameric helicase required to process aberrant forks into homologous recombination substrates and to orchestrate homologous recombination with resection, fork stabilization and fork restart. In eggs, required for elongation during DNA replication by facilitating the recruitment of rpa2/rpa34 and stimulating the processivity of DNA polymerases at replication foci. Probably not required for DNA replication in other cells. In Xenopus laevis (African clawed frog), this protein is DNA helicase MCM8 (mcm8).